The sequence spans 179 residues: Inner membrane-spanning protein YciB (179 aa).

The next 6 helical transmembrane spans lie at 3–23 (FLFDLFPVILFFAAFKLADIY), 24–44 (TATAVAIGATVLQIGWVWFRH), 49–69 (PMQWVSLLIIAVFGGATLVLH), 76–96 (WKPTVLYWLFAAALLGSVLVW), 121–141 (LAWAGFFAAMGVLNLYVAYQF), and 149–169 (FKLFGSMGLMLVFIVAQSVWL).

It belongs to the YciB family.

It is found in the cell inner membrane. Functionally, plays a role in cell envelope biogenesis, maintenance of cell envelope integrity and membrane homeostasis. This chain is Inner membrane-spanning protein YciB, found in Cupriavidus taiwanensis (strain DSM 17343 / BCRC 17206 / CCUG 44338 / CIP 107171 / LMG 19424 / R1) (Ralstonia taiwanensis (strain LMG 19424)).